The chain runs to 385 residues: Transcription termination factor 2, mitochondrial (385 aa).

The transit peptide at 1 to 35 (MLWKLLLRSQSCRLCSFRKMRSPPKYRPFLACFTY) directs the protein to the mitochondrion.

It belongs to the mTERF family. In terms of assembly, monomer. Expressed in skeletal muscle, heart, liver and pancreas.

Its subcellular location is the mitochondrion. It localises to the mitochondrion matrix. The protein resides in the mitochondrion nucleoid. Functionally, binds mitochondrial DNA and plays a role in the regulation of transcription of mitochondrial mRNA and rRNA species. In Homo sapiens (Human), this protein is Transcription termination factor 2, mitochondrial (MTERF2).